Reading from the N-terminus, the 261-residue chain is Acetoacetate decarboxylase 2 (261 aa).

Lys-116 (schiff-base intermediate with acetoacetate) is an active-site residue.

It belongs to the ADC family.

The enzyme catalyses acetoacetate + H(+) = acetone + CO2. Its function is as follows. Catalyzes the conversion of acetoacetate to acetone and carbon dioxide. The polypeptide is Acetoacetate decarboxylase 2 (Mesorhizobium japonicum (strain LMG 29417 / CECT 9101 / MAFF 303099) (Mesorhizobium loti (strain MAFF 303099))).